The following is a 303-amino-acid chain: GMP synthase [glutamine-hydrolyzing] subunit B (303 aa).

Residues methionine 1–arginine 183 form the GMPS ATP-PPase domain. Residue serine 28–serine 34 participates in ATP binding.

As to quaternary structure, heterodimer composed of a glutamine amidotransferase subunit (A) and a GMP-binding subunit (B).

The catalysed reaction is XMP + L-glutamine + ATP + H2O = GMP + L-glutamate + AMP + diphosphate + 2 H(+). It functions in the pathway purine metabolism; GMP biosynthesis; GMP from XMP (L-Gln route): step 1/1. Functionally, catalyzes the synthesis of GMP from XMP. In Archaeoglobus fulgidus (strain ATCC 49558 / DSM 4304 / JCM 9628 / NBRC 100126 / VC-16), this protein is GMP synthase [glutamine-hydrolyzing] subunit B (guaAB).